Here is a 636-residue protein sequence, read N- to C-terminus: MINITTSFPNKTAAAFHKHVTGSEVASAMFPEIAGSIVALFVDGNLQDLATPISKDGSVDPVTIESNTGMDIIRHDAAHIMARAVREIFPDTKLAIGPTIENGFYYDFDLSHSLSEKDFEAIERKMSDIIAKDERFVREVWPRERAIKFFEDLGEHYKLEILSKVPLGEEITVYKHGEFVDLCRGPHAPSARYVKAFKLTKISGAYWLGDQKNKMLQRVYGTAWHSSEALASYIHNMQEAEKRDHRKIAKDLGWFHIQNEALGQVFWHDKGWVIYRIIEEYIRCKLKKHGYLEVKTPIMLDRKLWEKSGHWEKFKENMFVVEDDKKELAIKPMNCPCHVQIFKSKIRSYKELPIRMAEFGMCHRNEPSGSLYGLMRVRGFTQDDAHIFCTHEQVRDEVLRFYELLMEVYKDFGFDSVTVKLSDRPENRIGSDEIWDRSEQSLMEPMNALGVQYTINKGEGAFYGPKLEFTLKDSIGREWQCGTVQLDFVLPDRLGAYYIGEDGKKHIPVIIHRAVLGTIERFIGILIEHYAGNIPAWLAPVQLEILTVSGEVAEYARDLAEMASQENVRVELNAAEENISHKIRKAIFNKVPIVWVVGKSEAGDRCVSVRRYGSGETCRMAAGKALKTLLTCVSMR.

The TGS domain maps to 1–63; it reads MINITTSFPN…SKDGSVDPVT (63 aa). Positions 244–535 are catalytic; the sequence is DHRKIAKDLG…LIEHYAGNIP (292 aa). Zn(2+) contacts are provided by C335, H386, and H512.

It belongs to the class-II aminoacyl-tRNA synthetase family. In terms of assembly, homodimer. It depends on Zn(2+) as a cofactor.

It is found in the cytoplasm. It catalyses the reaction tRNA(Thr) + L-threonine + ATP = L-threonyl-tRNA(Thr) + AMP + diphosphate + H(+). In terms of biological role, catalyzes the attachment of threonine to tRNA(Thr) in a two-step reaction: L-threonine is first activated by ATP to form Thr-AMP and then transferred to the acceptor end of tRNA(Thr). Also edits incorrectly charged L-seryl-tRNA(Thr). The chain is Threonine--tRNA ligase from Anaplasma marginale (strain Florida).